The primary structure comprises 545 residues: CTP synthase (545 aa).

Positions 1–266 (MATNYIFVTG…DTFVCDRFRL (266 aa)) are amidoligase domain. Residue Ser14 coordinates CTP. Residue Ser14 participates in UTP binding. Residues 15 to 20 (SLGKGI) and Asp72 each bind ATP. Residues Asp72 and Glu140 each coordinate Mg(2+). CTP-binding positions include 147–149 (DIE), 187–192 (KTKPTQ), and Lys223. Residues 187–192 (KTKPTQ) and Lys223 contribute to the UTP site. 239–241 (KDV) is an ATP binding site. The 252-residue stretch at 291–542 (TIGMVGKYVE…VKAAKDYQDS (252 aa)) folds into the Glutamine amidotransferase type-1 domain. Position 352 (Gly352) interacts with L-glutamine. Cys379 serves as the catalytic Nucleophile; for glutamine hydrolysis. Residues 380 to 383 (LGMQ), Glu403, and Arg470 contribute to the L-glutamine site. Catalysis depends on residues His515 and Glu517.

The protein belongs to the CTP synthase family. Homotetramer.

It catalyses the reaction UTP + L-glutamine + ATP + H2O = CTP + L-glutamate + ADP + phosphate + 2 H(+). It carries out the reaction L-glutamine + H2O = L-glutamate + NH4(+). The catalysed reaction is UTP + NH4(+) + ATP = CTP + ADP + phosphate + 2 H(+). It participates in pyrimidine metabolism; CTP biosynthesis via de novo pathway; CTP from UDP: step 2/2. Its activity is regulated as follows. Allosterically activated by GTP, when glutamine is the substrate; GTP has no effect on the reaction when ammonia is the substrate. The allosteric effector GTP functions by stabilizing the protein conformation that binds the tetrahedral intermediate(s) formed during glutamine hydrolysis. Inhibited by the product CTP, via allosteric rather than competitive inhibition. Catalyzes the ATP-dependent amination of UTP to CTP with either L-glutamine or ammonia as the source of nitrogen. Regulates intracellular CTP levels through interactions with the four ribonucleotide triphosphates. The sequence is that of CTP synthase from Actinobacillus pleuropneumoniae serotype 7 (strain AP76).